The primary structure comprises 235 residues: 1-(5-phosphoribosyl)-5-[(5-phosphoribosylamino)methylideneamino] imidazole-4-carboxamide isomerase (235 aa).

The Proton acceptor role is filled by Asp8. Residue Asp127 is the Proton donor of the active site.

The protein belongs to the HisA/HisF family.

The protein localises to the cytoplasm. It carries out the reaction 1-(5-phospho-beta-D-ribosyl)-5-[(5-phospho-beta-D-ribosylamino)methylideneamino]imidazole-4-carboxamide = 5-[(5-phospho-1-deoxy-D-ribulos-1-ylimino)methylamino]-1-(5-phospho-beta-D-ribosyl)imidazole-4-carboxamide. Its pathway is amino-acid biosynthesis; L-histidine biosynthesis; L-histidine from 5-phospho-alpha-D-ribose 1-diphosphate: step 4/9. In Aliarcobacter butzleri (strain RM4018) (Arcobacter butzleri), this protein is 1-(5-phosphoribosyl)-5-[(5-phosphoribosylamino)methylideneamino] imidazole-4-carboxamide isomerase.